A 120-amino-acid chain; its full sequence is Large ribosomal subunit protein uL18 (120 aa).

The protein belongs to the universal ribosomal protein uL18 family. Part of the 50S ribosomal subunit; part of the 5S rRNA/L5/L18/L25 subcomplex. Contacts the 5S and 23S rRNAs.

Its function is as follows. This is one of the proteins that bind and probably mediate the attachment of the 5S RNA into the large ribosomal subunit, where it forms part of the central protuberance. The sequence is that of Large ribosomal subunit protein uL18 from Treponema pallidum (strain Nichols).